Here is a 357-residue protein sequence, read N- to C-terminus: UDP-N-acetylglucosamine--N-acetylmuramyl-(pentapeptide) pyrophosphoryl-undecaprenol N-acetylglucosamine transferase (357 aa).

Residues 14-16 (TGG), N126, R162, S190, I246, 265-270 (ALTVCE), and Q290 each bind UDP-N-acetyl-alpha-D-glucosamine.

Belongs to the glycosyltransferase 28 family. MurG subfamily.

The protein localises to the cell inner membrane. It carries out the reaction di-trans,octa-cis-undecaprenyl diphospho-N-acetyl-alpha-D-muramoyl-L-alanyl-D-glutamyl-meso-2,6-diaminopimeloyl-D-alanyl-D-alanine + UDP-N-acetyl-alpha-D-glucosamine = di-trans,octa-cis-undecaprenyl diphospho-[N-acetyl-alpha-D-glucosaminyl-(1-&gt;4)]-N-acetyl-alpha-D-muramoyl-L-alanyl-D-glutamyl-meso-2,6-diaminopimeloyl-D-alanyl-D-alanine + UDP + H(+). Its pathway is cell wall biogenesis; peptidoglycan biosynthesis. Its function is as follows. Cell wall formation. Catalyzes the transfer of a GlcNAc subunit on undecaprenyl-pyrophosphoryl-MurNAc-pentapeptide (lipid intermediate I) to form undecaprenyl-pyrophosphoryl-MurNAc-(pentapeptide)GlcNAc (lipid intermediate II). The sequence is that of UDP-N-acetylglucosamine--N-acetylmuramyl-(pentapeptide) pyrophosphoryl-undecaprenol N-acetylglucosamine transferase from Histophilus somni (strain 129Pt) (Haemophilus somnus).